Consider the following 248-residue polypeptide: Ferric nitrobindin-like protein (248 aa).

Polar residues-rich tracts occupy residues 1 to 25 (MSSD…TNSG) and 32 to 43 (QAVNLAAEQSKS). Positions 1 to 49 (MSSDKANNQSPDQGANTPAESTNSGPKLDGNQAVNLAAEQSKSTADKNL) are disordered. Positions 82–88 (GVWRGQG) match the GXWXGXG motif. The disordered stretch occupies residues 118–147 (SRTWKINPPAEEGAEADGDEASAESAGEPE). A compositionally biased stretch (acidic residues) spans 129-139 (EGAEADGDEAS).

The protein belongs to the nitrobindin family.

The polypeptide is Ferric nitrobindin-like protein (Corynebacterium urealyticum (strain ATCC 43042 / DSM 7109)).